The sequence spans 332 residues: UDP-3-O-acylglucosamine N-acyltransferase (332 aa).

His231 acts as the Proton acceptor in catalysis.

The protein belongs to the transferase hexapeptide repeat family. LpxD subfamily. Homotrimer.

The enzyme catalyses a UDP-3-O-[(3R)-3-hydroxyacyl]-alpha-D-glucosamine + a (3R)-hydroxyacyl-[ACP] = a UDP-2-N,3-O-bis[(3R)-3-hydroxyacyl]-alpha-D-glucosamine + holo-[ACP] + H(+). The protein operates within bacterial outer membrane biogenesis; LPS lipid A biosynthesis. Functionally, catalyzes the N-acylation of UDP-3-O-acylglucosamine using 3-hydroxyacyl-ACP as the acyl donor. Is involved in the biosynthesis of lipid A, a phosphorylated glycolipid that anchors the lipopolysaccharide to the outer membrane of the cell. The sequence is that of UDP-3-O-acylglucosamine N-acyltransferase from Vesicomyosocius okutanii subsp. Calyptogena okutanii (strain HA).